We begin with the raw amino-acid sequence, 843 residues long: Protein P (843 aa).

Residues 1–177 (MPLSYQHFRR…FCGSPYSWEQ (177 aa)) are terminal protein domain (TP). Residues 178–346 (ELQHGSTSLN…YCLSHIINLL (169 aa)) form a spacer region. The disordered stretch occupies residues 228–316 (KQGQLANGKQ…VPPSTVGSES (89 aa)). Composition is skewed to polar residues over residues 262 to 276 (TGHS…TSRF), 286 to 299 (NPSL…TSTG), and 307 to 316 (VPPSTVGSES). The segment at 347-690 (EDWGPCYEHG…YMNLYPVARQ (344 aa)) is polymerase/reverse transcriptase domain (RT). Residues 357–600 (EHHIRTPRTP…YSLHFMGYII (244 aa)) form the Reverse transcriptase domain. Residues Asp429, Asp551, and Asp552 each contribute to the Mg(2+) site.

This sequence belongs to the hepadnaviridae P protein family.

The catalysed reaction is DNA(n) + a 2'-deoxyribonucleoside 5'-triphosphate = DNA(n+1) + diphosphate. The enzyme catalyses Endonucleolytic cleavage to 5'-phosphomonoester.. With respect to regulation, activated by host HSP70 and HSP40 in vitro to be able to bind the epsilon loop of the pgRNA. Because deletion of the RNase H region renders the protein partly chaperone-independent, the chaperones may be needed indirectly to relieve occlusion of the RNA-binding site by this domain. Inhibited by several reverse-transcriptase inhibitors: Lamivudine, Adefovir and Entecavir. In terms of biological role, multifunctional enzyme that converts the viral RNA genome into dsDNA in viral cytoplasmic capsids. This enzyme displays a DNA polymerase activity that can copy either DNA or RNA templates, and a ribonuclease H (RNase H) activity that cleaves the RNA strand of RNA-DNA heteroduplexes in a partially processive 3'- to 5'-endonucleasic mode. Neo-synthesized pregenomic RNA (pgRNA) are encapsidated together with the P protein, and reverse-transcribed inside the nucleocapsid. Initiation of reverse-transcription occurs first by binding the epsilon loop on the pgRNA genome, and is initiated by protein priming, thereby the 5'-end of (-)DNA is covalently linked to P protein. Partial (+)DNA is synthesized from the (-)DNA template and generates the relaxed circular DNA (RC-DNA) genome. After budding and infection, the RC-DNA migrates in the nucleus, and is converted into a plasmid-like covalently closed circular DNA (cccDNA). The activity of P protein does not seem to be necessary for cccDNA generation, and is presumably released from (+)DNA by host nuclear DNA repair machinery. This chain is Protein P, found in Homo sapiens (Human).